The following is a 780-amino-acid chain: Heat shock protein 90-5, chloroplastic (780 aa).

The N-terminal 60 residues, methionine 1–lysine 60, are a transit peptide targeting the chloroplast. ATP contacts are provided by residues glutamate 106, asparagine 110, aspartate 152, methionine 157, serine 172–glycine 173, glutamine 196–phenylalanine 201, threonine 251, and arginine 441. Positions glycine 742–aspartate 780 are disordered. A compositionally biased stretch (basic and acidic residues) spans serine 769–aspartate 780.

It belongs to the heat shock protein 90 family. As to quaternary structure, homodimer. Interacts with VIPP1. Interacts with P23-1. As to expression, expressed in roots, cotyledons, young leaves, mature leaves, stems, flowers, petals and siliques.

It is found in the plastid. Its subcellular location is the chloroplast stroma. Functionally, molecular chaperone required for chloroplast biogenesis. Essential for chloroplast biogenesis and maintenance, and thus for embryogenesis. May be involved in the disassembly of VIPP1 for thylakoid membrane formation and/or maintenance. Cooperates with TIC components and other molecular chaperones to drive transport of preproteins into chloroplasts and functions in the chloroplast stroma to facilitate membrane translocation during protein import into the organelle. This Arabidopsis thaliana (Mouse-ear cress) protein is Heat shock protein 90-5, chloroplastic.